Consider the following 141-residue polypeptide: MAKKVVAIIKLAITAGKANPAPPIGPALGQHGVNIMMFCKEYNARTADQAGLVIPVEISVYEDRSFTFILKTPPASVLIQKAAGIERGSGEPNKKKVGKITTAQLREIAQTKLPDLNANDVDAAMRIVAGTARNMGVTIVD.

Belongs to the universal ribosomal protein uL11 family. In terms of assembly, part of the ribosomal stalk of the 50S ribosomal subunit. Interacts with L10 and the large rRNA to form the base of the stalk. L10 forms an elongated spine to which L12 dimers bind in a sequential fashion forming a multimeric L10(L12)X complex. In terms of processing, one or more lysine residues are methylated.

Forms part of the ribosomal stalk which helps the ribosome interact with GTP-bound translation factors. The polypeptide is Large ribosomal subunit protein uL11 (Cyanothece sp. (strain PCC 7425 / ATCC 29141)).